We begin with the raw amino-acid sequence, 310 residues long: tRNA pseudouridine synthase B (310 aa).

The active-site Nucleophile is the Asp49.

It belongs to the pseudouridine synthase TruB family. Type 1 subfamily.

The enzyme catalyses uridine(55) in tRNA = pseudouridine(55) in tRNA. In terms of biological role, responsible for synthesis of pseudouridine from uracil-55 in the psi GC loop of transfer RNAs. The chain is tRNA pseudouridine synthase B from Idiomarina loihiensis (strain ATCC BAA-735 / DSM 15497 / L2-TR).